Consider the following 511-residue polypeptide: Sorting nexin MVP1 (511 aa).

Residues 1-36 are disordered; the sequence is MDNYEGSDPWNTSSNAWTKDDDHVVSTTNSEPSLNG. The segment covering 25–36 has biased composition (polar residues); sequence VSTTNSEPSLNG. The PX domain maps to 128-247; that stretch reads DADIIIIEEI…TFLTVRTDLT (120 aa). A 1,2-diacyl-sn-glycero-3-phospho-(1D-myo-inositol-3-phosphate) contacts are provided by R172, S174, K198, and R213.

This sequence belongs to the sorting nexin family. In terms of assembly, homodimer. Forms an autoinhibited tetramer consisting of 2 homodimers that self-interact, wherein the membrane-interacting BAR surfaces are sequestered and the PX lipid-binding sites are occluded. Interacts with VPS1.

Its subcellular location is the cytoplasm. It localises to the endosome membrane. In terms of biological role, required for vacuolar protein sorting. Component of the retromer-mediated endosome-to-Golgi retrograde pathway. Required for efficient cargo export from the endosome, promoting VPS1-mediated fission of retromer-coated tubules that bud from the endosome. In Saccharomyces cerevisiae (strain ATCC 204508 / S288c) (Baker's yeast), this protein is Sorting nexin MVP1 (MVP1).